Here is a 258-residue protein sequence, read N- to C-terminus: Imidazole glycerol phosphate synthase subunit HisF (258 aa).

Active-site residues include Asp-11 and Asp-130.

This sequence belongs to the HisA/HisF family. As to quaternary structure, heterodimer of HisH and HisF.

Its subcellular location is the cytoplasm. It catalyses the reaction 5-[(5-phospho-1-deoxy-D-ribulos-1-ylimino)methylamino]-1-(5-phospho-beta-D-ribosyl)imidazole-4-carboxamide + L-glutamine = D-erythro-1-(imidazol-4-yl)glycerol 3-phosphate + 5-amino-1-(5-phospho-beta-D-ribosyl)imidazole-4-carboxamide + L-glutamate + H(+). Its pathway is amino-acid biosynthesis; L-histidine biosynthesis; L-histidine from 5-phospho-alpha-D-ribose 1-diphosphate: step 5/9. Its function is as follows. IGPS catalyzes the conversion of PRFAR and glutamine to IGP, AICAR and glutamate. The HisF subunit catalyzes the cyclization activity that produces IGP and AICAR from PRFAR using the ammonia provided by the HisH subunit. In Azorhizobium caulinodans (strain ATCC 43989 / DSM 5975 / JCM 20966 / LMG 6465 / NBRC 14845 / NCIMB 13405 / ORS 571), this protein is Imidazole glycerol phosphate synthase subunit HisF.